We begin with the raw amino-acid sequence, 208 residues long: Ribosome maturation factor RimP (208 aa).

A disordered region spans residues 175–208; sequence GEDVEDLVADPGADDELDELDELDELDDGDEDEQ. Over residues 177 to 208 the composition is skewed to acidic residues; it reads DVEDLVADPGADDELDELDELDELDDGDEDEQ.

This sequence belongs to the RimP family.

Its subcellular location is the cytoplasm. Required for maturation of 30S ribosomal subunits. The polypeptide is Ribosome maturation factor RimP (Kineococcus radiotolerans (strain ATCC BAA-149 / DSM 14245 / SRS30216)).